A 140-amino-acid chain; its full sequence is Truncated tyrosine phosphatase D1 (140 aa).

The Tyrosine-protein phosphatase domain maps to 1-140 (MRRPNCIAEI…SAQWIQFLKK (140 aa)).

This sequence belongs to the protein-tyrosine phosphatase family.

This Microplitis demolitor bracovirus (isolate Webb) (MdBV) protein is Truncated tyrosine phosphatase D1 (D1).